The sequence spans 626 residues: DNA (cytosine-5)-methyltransferase DRM2 (626 aa).

2 consecutive UBA domains span residues 59-101 (GFSD…ISKY) and 109-150 (SSKS…LLSC). The span at 160–187 (VEEEDGIDWSSSDDDTNYTDMLNSDDEK) shows a compositional bias: acidic residues. 2 disordered regions span residues 160-196 (VEEE…ENGS) and 245-282 (TEHE…PNPM). The UBA 3 domain occupies 190–232 (NSNENGSKIRSLVKMGFSELEASLAVERCGENVDIAELTDFLC). Residues 262–276 (ESKGEPRSSVDDEPI) show a composition bias toward basic and acidic residues. The region spanning 295–626 (THRSLPELAR…EVVRARMRGS (332 aa)) is the SAM-dependent MTase DRM-type domain.

The protein belongs to the class I-like SAM-binding methyltransferase superfamily. DRM-methyltransferase family. Interacts with RDM1. Expressed in roots, inflorescences and at lower levels in leaves.

The protein localises to the nucleus. It is found in the nucleoplasm. It catalyses the reaction a 2'-deoxycytidine in DNA + S-adenosyl-L-methionine = a 5-methyl-2'-deoxycytidine in DNA + S-adenosyl-L-homocysteine + H(+). Involved in de novo DNA methylation. Controls asymmetric and CpNpG methylation. Required for FWA gene silencing but not for the maintenance of SUP gene silencing. Functionally redundant to CMT3 to maintain non-CpG methylation. Involved in RNA-directed DNA methylation (RdDM). Acts as major DNA methyltransferase in the RdDM pathway, and is essential for RNA-directed de novo DNA methylation of cytosines in all sequence contexts. Associates with long non-coding RNA (lncRNA) produced by RNA polymerase V (Pol V). This association is dependent on AGO4 and IDN2, and results in DNA methylation of RdDM target loci. This chain is DNA (cytosine-5)-methyltransferase DRM2 (DRM2), found in Arabidopsis thaliana (Mouse-ear cress).